A 129-amino-acid chain; its full sequence is Small ribosomal subunit protein eS6 (129 aa).

This sequence belongs to the eukaryotic ribosomal protein eS6 family.

In Methanocorpusculum labreanum (strain ATCC 43576 / DSM 4855 / Z), this protein is Small ribosomal subunit protein eS6.